We begin with the raw amino-acid sequence, 355 residues long: Erythronate-4-phosphate dehydrogenase (355 aa).

Substrate-binding residues include serine 45 and threonine 66. Aspartate 146 contacts NAD(+). Arginine 206 is an active-site residue. Position 229 (aspartate 229) interacts with NAD(+). Glutamate 234 is a catalytic residue. Histidine 251 acts as the Proton donor in catalysis. Glycine 254 contacts NAD(+). Tyrosine 255 is a substrate binding site.

Belongs to the D-isomer specific 2-hydroxyacid dehydrogenase family. PdxB subfamily. Homodimer.

It localises to the cytoplasm. The enzyme catalyses 4-phospho-D-erythronate + NAD(+) = (R)-3-hydroxy-2-oxo-4-phosphooxybutanoate + NADH + H(+). It functions in the pathway cofactor biosynthesis; pyridoxine 5'-phosphate biosynthesis; pyridoxine 5'-phosphate from D-erythrose 4-phosphate: step 2/5. In terms of biological role, catalyzes the oxidation of erythronate-4-phosphate to 3-hydroxy-2-oxo-4-phosphonooxybutanoate. The protein is Erythronate-4-phosphate dehydrogenase of Acinetobacter baylyi (strain ATCC 33305 / BD413 / ADP1).